The chain runs to 331 residues: Putative ankyrin repeat protein FPV012 (331 aa).

4 ANK repeats span residues 11–40, 44–73, 77–106, and 110–139; these read DGYT…NPNT, DSYT…NVDK, DGYT…NPNY, and YGIT…NCNQ.

The chain is Putative ankyrin repeat protein FPV012 from Vertebrata (FPV).